The following is a 229-amino-acid chain: Large ribosomal subunit protein uL1 (229 aa).

The protein belongs to the universal ribosomal protein uL1 family. Part of the 50S ribosomal subunit.

Its function is as follows. Binds directly to 23S rRNA. The L1 stalk is quite mobile in the ribosome, and is involved in E site tRNA release. Protein L1 is also a translational repressor protein, it controls the translation of the L11 operon by binding to its mRNA. The sequence is that of Large ribosomal subunit protein uL1 from Lacticaseibacillus casei (strain BL23) (Lactobacillus casei).